The chain runs to 268 residues: Protein DEEPER ROOTING 1 (268 aa).

The segment covering 11 to 21 (LNGKQGNKKPN) has biased composition (low complexity). Positions 11-39 (LNGKQGNKKPNTVPITTHPAKQEPREEFS) are disordered. A compositionally biased stretch (basic and acidic residues) spans 30–39 (AKQEPREEFS). The short motif at 44-50 (GLLAIGT) is the IGT motif element. The tract at residues 220–246 (SRAASMKKYLEDRQIPTKKESNTEDDT) is disordered. Basic and acidic residues predominate over residues 227–246 (KYLEDRQIPTKKESNTEDDT).

It belongs to the LAZY family. As to expression, expressed in roots.

Involved in the development of the root system architecture by influencing lateral root angles and primary root length. This chain is Protein DEEPER ROOTING 1, found in Prunus persica (Peach).